The following is a 531-amino-acid chain: Polyamine transporter PUT1 (531 aa).

The interval 1 to 76 is disordered; sequence MADTGGRPEV…LPDGDAGGPM (76 aa). The segment covering 17-33 has biased composition (low complexity); the sequence is SPGHPAASTTAAAAADL. A compositionally biased stretch (basic and acidic residues) spans 34–44; it reads GHADTGQEKPT. Transmembrane regions (helical) follow at residues 83-103, 113-133, 147-167, 193-213, 224-244, 262-284, 296-316, 341-361, 391-411, 414-434, 453-473, and 476-496; these read VSMIPLIFLIFYEVSGGPFGI, LLAIIGFLVLPVIWSIPEALI, YVVWVASALGPYWGFQQGWMK, LGGGAPRAFAVVGLTAVLTLL, VAICLGVFSLLPFFVMGLIAL, WNLYLNTLFWNLNYWDSISTLAG, ALFYAVIFVVVAYLYPLLAGT, AWLMWWVQSAAALSNMGMFVA, TPLAGILFSASGVLLLSMMSF, IVAAENFLYCFGMLLEFVAFI, TAGCVAMLVPPTALIAVVLAL, and LKVAVVSLGAVAMGLVLQPAL.

This sequence belongs to the amino acid-polyamine-organocation (APC) superfamily. Polyamine:cation symporter (PHS) (TC 2.A.3.12) family. As to expression, expressed in seedling roots, leaves, stems, flowers and siliques.

It is found in the cell membrane. Cell membrane polyamine/proton symporter involved in the polyamine uptake in cells. Possesses high affinity for spermidine and lower affinity for spermine and putrescine. Transports paraquat, a polyamine analog, and thus confers sensitivity to this chemical which is used as a herbicide. The protein is Polyamine transporter PUT1 (PUT1) of Oryza sativa subsp. japonica (Rice).